The following is a 1335-amino-acid chain: Protein SPATA31F1 (1335 aa).

The helical transmembrane segment at leucine 8–isoleucine 28 threads the bilayer. Disordered stretches follow at residues alanine 403 to aspartate 424, leucine 480 to serine 502, valine 972 to methionine 1002, proline 1019 to serine 1141, and glutamate 1248 to threonine 1335. Residues serine 414 to aspartate 424 are compositionally biased toward polar residues. Polar residues predominate over residues valine 972–glycine 1000. Basic and acidic residues-rich tracts occupy residues asparagine 1047–aspartate 1064, serine 1071–arginine 1083, and proline 1129–glutamine 1139.

Belongs to the SPATA31 family.

Its subcellular location is the membrane. The polypeptide is Protein SPATA31F1 (Homo sapiens (Human)).